Reading from the N-terminus, the 274-residue chain is 4-hydroxy-3-methylbut-2-enyl diphosphate reductase (274 aa).

Cys12 lines the [4Fe-4S] cluster pocket. 2 residues coordinate (2E)-4-hydroxy-3-methylbut-2-enyl diphosphate: His36 and His70. 2 residues coordinate dimethylallyl diphosphate: His36 and His70. The isopentenyl diphosphate site is built by His36 and His70. Cys92 lines the [4Fe-4S] cluster pocket. His120 contributes to the (2E)-4-hydroxy-3-methylbut-2-enyl diphosphate binding site. His120 serves as a coordination point for dimethylallyl diphosphate. Isopentenyl diphosphate is bound at residue His120. Glu122 functions as the Proton donor in the catalytic mechanism. Thr158 serves as a coordination point for (2E)-4-hydroxy-3-methylbut-2-enyl diphosphate. A [4Fe-4S] cluster-binding site is contributed by Cys186. Residues Ser214, Ser215, Asn216, and Ser258 each coordinate (2E)-4-hydroxy-3-methylbut-2-enyl diphosphate. Positions 214, 215, 216, and 258 each coordinate dimethylallyl diphosphate. Isopentenyl diphosphate is bound by residues Ser214, Ser215, Asn216, and Ser258.

It belongs to the IspH family. Requires [4Fe-4S] cluster as cofactor.

It catalyses the reaction isopentenyl diphosphate + 2 oxidized [2Fe-2S]-[ferredoxin] + H2O = (2E)-4-hydroxy-3-methylbut-2-enyl diphosphate + 2 reduced [2Fe-2S]-[ferredoxin] + 2 H(+). It carries out the reaction dimethylallyl diphosphate + 2 oxidized [2Fe-2S]-[ferredoxin] + H2O = (2E)-4-hydroxy-3-methylbut-2-enyl diphosphate + 2 reduced [2Fe-2S]-[ferredoxin] + 2 H(+). The protein operates within isoprenoid biosynthesis; dimethylallyl diphosphate biosynthesis; dimethylallyl diphosphate from (2E)-4-hydroxy-3-methylbutenyl diphosphate: step 1/1. It functions in the pathway isoprenoid biosynthesis; isopentenyl diphosphate biosynthesis via DXP pathway; isopentenyl diphosphate from 1-deoxy-D-xylulose 5-phosphate: step 6/6. Catalyzes the conversion of 1-hydroxy-2-methyl-2-(E)-butenyl 4-diphosphate (HMBPP) into a mixture of isopentenyl diphosphate (IPP) and dimethylallyl diphosphate (DMAPP). Acts in the terminal step of the DOXP/MEP pathway for isoprenoid precursor biosynthesis. This is 4-hydroxy-3-methylbut-2-enyl diphosphate reductase from Helicobacter pylori (strain P12).